Here is a 179-residue protein sequence, read N- to C-terminus: Peptidyl-tRNA hydrolase (179 aa).

Tyr-14 is a tRNA binding site. Residue His-19 is the Proton acceptor of the active site. The tRNA site is built by Tyr-61, Asn-63, and Asn-107.

It belongs to the PTH family. In terms of assembly, monomer.

The protein resides in the cytoplasm. The enzyme catalyses an N-acyl-L-alpha-aminoacyl-tRNA + H2O = an N-acyl-L-amino acid + a tRNA + H(+). In terms of biological role, hydrolyzes ribosome-free peptidyl-tRNAs (with 1 or more amino acids incorporated), which drop off the ribosome during protein synthesis, or as a result of ribosome stalling. Catalyzes the release of premature peptidyl moieties from peptidyl-tRNA molecules trapped in stalled 50S ribosomal subunits, and thus maintains levels of free tRNAs and 50S ribosomes. The polypeptide is Peptidyl-tRNA hydrolase (Campylobacter lari (strain RM2100 / D67 / ATCC BAA-1060)).